A 1251-amino-acid polypeptide reads, in one-letter code: Botulinum neurotoxin type E (1251 aa).

H212 is a binding site for Zn(2+). The active site involves E213. H216 and E251 together coordinate Zn(2+). A disulfide bond links C412 and C426. The tract at residues 423–819 (KSICIEINNG…ELNSMVIDTL (397 aa)) is translocation domain (TD). The interval 466–515 (NDLDQVILNFNSESAPGLSDEKLNLTIQNDAYIPKYDSNGTSDIEQHDVN) is belt. The tract at residues 845-1067 (KRIKSSSVLN…EIQTLYNNEP (223 aa)) is N-terminus of receptor binding domain (N-RBD). The segment at 1068–1251 (NANILKDFWG…ISEEHGWQEK (184 aa)) is C-terminus of receptor binding domain (C-RBD). Positions 1221–1224 (STWY) match the Host ganglioside-binding motif motif.

Belongs to the peptidase M27 family. In terms of assembly, heterodimer; disulfide-linked heterodimer of a light chain (LC) and a heavy chain (HC). The LC has the proteolytic/pharmacological activity, while the N- and C-terminal of the HC mediate channel formation and toxin binding, respectively. Interacts with host synaptic vesicle glycoproteins SV2A and SV2B which probably serve as coreceptors. Zn(2+) is required as a cofactor.

It is found in the secreted. The protein resides in the host cytoplasm. The protein localises to the host cytosol. Its subcellular location is the host synapse. It localises to the host presynaptic cell membrane. It is found in the host cytoplasmic vesicle. The protein resides in the host secretory vesicle. The protein localises to the host synaptic vesicle membrane. It catalyses the reaction Limited hydrolysis of proteins of the neuroexocytosis apparatus, synaptobrevins, SNAP25 or syntaxin. No detected action on small molecule substrates.. Botulinum toxin causes flaccid paralysis by inhibiting neurotransmitter (acetylcholine) release from the presynaptic membranes of nerve terminals of eukaryotic host skeletal and autonomic nervous system, with frequent heart or respiratory failure. Precursor of botulinum neurotoxin E which has 2 coreceptors; complex polysialylated gangliosides found on neural tissue and specific membrane-anchored proteins found in synaptic vesicles. Receptor proteins are exposed on host presynaptic cell membrane during neurotransmitter release, when the toxin heavy chain (HC) binds to them. Upon synaptic vesicle recycling the toxin is taken up via the endocytic pathway. When the pH of the toxin-containing endosome drops a structural rearrangement occurs so that the N-terminus of the HC forms pores that allows the light chain (LC) to translocate into the cytosol. Once in the cytosol the disulfide bond linking the 2 subunits is reduced and LC cleaves its target protein on synaptic vesicles, preventing their fusion with the cytoplasmic membrane and thus neurotransmitter release. In terms of biological role, has proteolytic activity. After translocation into the eukaryotic host cytosol, LC hydrolyzes the '180-Arg-|-Ile-181' bond in SNAP25, blocking neurotransmitter release. Its function is as follows. Responsible for host epithelial cell transcytosis, host nerve cell targeting and translocation of light chain (LC) into host cytosol. Composed of 3 subdomains; the translocation domain (TD), and N-terminus and C-terminus of the receptor-binding domain (RBD). The RBD is responsible for the adherence of the toxin to the cell surface. It simultaneously recognizes 2 coreceptors; host polysialated gangliosides and the receptor proteins SV2A and SV2B in close proximity on host synaptic vesicles. Interaction with SV2 proteins requires SV2 glycosylation. The N-terminus of the TD wraps an extended belt around the perimeter of the LC, protecting Zn(2+) in the active site; it may also prevent premature LC dissociation from the translocation channel and protect toxin prior to translocation. The TD inserts into synaptic vesicle membrane to allow translocation into the host cytosol. Binds ganglioside GD1a in vitro. The protein is Botulinum neurotoxin type E of Clostridium butyricum.